Reading from the N-terminus, the 182-residue chain is Ribosome-recycling factor (182 aa).

A disordered region spans residues 137-158 (KKSEKESEISEDQSRDEQDNVQ).

Belongs to the RRF family.

It is found in the cytoplasm. Responsible for the release of ribosomes from messenger RNA at the termination of protein biosynthesis. May increase the efficiency of translation by recycling ribosomes from one round of translation to another. This Prochlorococcus marinus (strain MIT 9211) protein is Ribosome-recycling factor.